A 409-amino-acid polypeptide reads, in one-letter code: Tyrosine--tRNA ligase (409 aa).

The 'HIGH' region motif lies at 54-63 (PTAPDIHLGH). Positions 238–242 (KMSKS) match the 'KMSKS' region motif. ATP is bound at residue lysine 241. The S4 RNA-binding domain maps to 347 to 407 (QGILRILREA…GKRKFARVKL (61 aa)).

The protein belongs to the class-I aminoacyl-tRNA synthetase family. TyrS type 2 subfamily. As to quaternary structure, homodimer.

The protein localises to the cytoplasm. The catalysed reaction is tRNA(Tyr) + L-tyrosine + ATP = L-tyrosyl-tRNA(Tyr) + AMP + diphosphate + H(+). In terms of biological role, catalyzes the attachment of tyrosine to tRNA(Tyr) in a two-step reaction: tyrosine is first activated by ATP to form Tyr-AMP and then transferred to the acceptor end of tRNA(Tyr). The chain is Tyrosine--tRNA ligase from Bordetella parapertussis (strain 12822 / ATCC BAA-587 / NCTC 13253).